Here is a 105-residue protein sequence, read N- to C-terminus: Pyrimidine/purine nucleoside phosphorylase (105 aa).

This sequence belongs to the nucleoside phosphorylase PpnP family.

It carries out the reaction a purine D-ribonucleoside + phosphate = a purine nucleobase + alpha-D-ribose 1-phosphate. The enzyme catalyses adenosine + phosphate = alpha-D-ribose 1-phosphate + adenine. The catalysed reaction is cytidine + phosphate = cytosine + alpha-D-ribose 1-phosphate. It catalyses the reaction guanosine + phosphate = alpha-D-ribose 1-phosphate + guanine. It carries out the reaction inosine + phosphate = alpha-D-ribose 1-phosphate + hypoxanthine. The enzyme catalyses thymidine + phosphate = 2-deoxy-alpha-D-ribose 1-phosphate + thymine. The catalysed reaction is uridine + phosphate = alpha-D-ribose 1-phosphate + uracil. It catalyses the reaction xanthosine + phosphate = alpha-D-ribose 1-phosphate + xanthine. Its function is as follows. Catalyzes the phosphorolysis of diverse nucleosides, yielding D-ribose 1-phosphate and the respective free bases. Can use uridine, adenosine, guanosine, cytidine, thymidine, inosine and xanthosine as substrates. Also catalyzes the reverse reactions. The protein is Pyrimidine/purine nucleoside phosphorylase of Wolinella succinogenes (strain ATCC 29543 / DSM 1740 / CCUG 13145 / JCM 31913 / LMG 7466 / NCTC 11488 / FDC 602W) (Vibrio succinogenes).